Here is a 161-residue protein sequence, read N- to C-terminus: 2-C-methyl-D-erythritol 2,4-cyclodiphosphate synthase (161 aa).

The a divalent metal cation site is built by D11 and H13. 4-CDP-2-C-methyl-D-erythritol 2-phosphate contacts are provided by residues 11-13 (DIH) and 37-38 (HS). H45 contacts a divalent metal cation. 4-CDP-2-C-methyl-D-erythritol 2-phosphate-binding positions include 59–61 (DIG), 135–138 (TTNE), and R145.

This sequence belongs to the IspF family. Homotrimer. It depends on a divalent metal cation as a cofactor.

The enzyme catalyses 4-CDP-2-C-methyl-D-erythritol 2-phosphate = 2-C-methyl-D-erythritol 2,4-cyclic diphosphate + CMP. Its pathway is isoprenoid biosynthesis; isopentenyl diphosphate biosynthesis via DXP pathway; isopentenyl diphosphate from 1-deoxy-D-xylulose 5-phosphate: step 4/6. In terms of biological role, involved in the biosynthesis of isopentenyl diphosphate (IPP) and dimethylallyl diphosphate (DMAPP), two major building blocks of isoprenoid compounds. Catalyzes the conversion of 4-diphosphocytidyl-2-C-methyl-D-erythritol 2-phosphate (CDP-ME2P) to 2-C-methyl-D-erythritol 2,4-cyclodiphosphate (ME-CPP) with a corresponding release of cytidine 5-monophosphate (CMP). In Cyanothece sp. (strain PCC 7425 / ATCC 29141), this protein is 2-C-methyl-D-erythritol 2,4-cyclodiphosphate synthase.